The following is a 370-amino-acid chain: Gibberellin 3-beta-dioxygenase 2-1 (370 aa).

The Fe2OG dioxygenase domain occupies 205-306 (MTATMHLNWY…RISLGYFLGP (102 aa)). His-229, Asp-231, and His-287 together coordinate Fe cation. Arg-297 is an active-site residue.

This sequence belongs to the iron/ascorbate-dependent oxidoreductase family. GA3OX subfamily. It depends on L-ascorbate as a cofactor. Requires Fe cation as cofactor. Expressed in internodes, nodes and the ear of the elongating stem.

It catalyses the reaction gibberellin A20 + 2-oxoglutarate + O2 = gibberellin A1 + succinate + CO2. In terms of biological role, converts the inactive gibberellin precursors GA9 and GA20 in the bioactives gibberellins GA4 and GA1. Also accepts GA15, GA44, the 2,3-unsaturated GA5 and 2,3-dihydroGA9 as substrate. No activity with GA12, GA53, GA24, GA19 and GA25. Also possesses 2-beta-hydroxylase, 2,3-desaturase, 2,3-epoxidase and 13-hydroxylase activities. This Triticum aestivum (Wheat) protein is Gibberellin 3-beta-dioxygenase 2-1 (GA3ox2-1).